The primary structure comprises 276 residues: Secretagogin (276 aa).

EF-hand domains lie at 12–47, 58–93, 105–140, 149–184, 197–232, and 240–276; these read LDAA…MLMK, NLHK…EDEN, DSSV…LFLH, KLEE…QENF, ERKR…MMEL, and VDLD…KINP. Residues Asp25, Asp27, Tyr31, Glu36, Asp71, Ser73, Asp75, Arg77, Glu82, Asp118, Asp120, Ser122, Glu129, Asp162, Asn164, Asp166, Arg168, Asp173, Asp210, Ser212, Thr214, Glu221, Asp254, Asn256, Asp258, Lys260, and Glu265 each contribute to the Ca(2+) site.

In terms of tissue distribution, expressed at high levels in the pancreatic islets of Langerhans and to a much lesser extent in the gastrointestinal tract (stomach, small intestine and colon), the adrenal medulla and cortex and the thyroid C-cells. In the brain, the expression is restricted to distinct subtypes of neurons with highest expression in the molecular layer of the cerebellum (stellate and basket cells), in the anterior part of the pituitary gland, in the thalamus, in the hypothalamus and in a subgroup of neocortical neurons.

The protein localises to the cytoplasm. Its subcellular location is the secreted. It is found in the cytoplasmic vesicle. The protein resides in the secretory vesicle membrane. The sequence is that of Secretagogin (SCGN) from Homo sapiens (Human).